A 473-amino-acid chain; its full sequence is 3-isopropylmalate dehydratase large subunit (473 aa).

Positions 354, 414, and 417 each coordinate [4Fe-4S] cluster. The tract at residues 425-448 (LAPGQRSASTSNRNFEGRQGRGGR) is disordered.

The protein belongs to the aconitase/IPM isomerase family. LeuC type 1 subfamily. As to quaternary structure, heterodimer of LeuC and LeuD. Requires [4Fe-4S] cluster as cofactor.

The catalysed reaction is (2R,3S)-3-isopropylmalate = (2S)-2-isopropylmalate. The protein operates within amino-acid biosynthesis; L-leucine biosynthesis; L-leucine from 3-methyl-2-oxobutanoate: step 2/4. In terms of biological role, catalyzes the isomerization between 2-isopropylmalate and 3-isopropylmalate, via the formation of 2-isopropylmaleate. In Acidothermus cellulolyticus (strain ATCC 43068 / DSM 8971 / 11B), this protein is 3-isopropylmalate dehydratase large subunit.